Reading from the N-terminus, the 304-residue chain is MTTLRIATRKSPLALWQSEHVAAALRQHHPGLEVVLVPMSTRGDEVLDRSLAAIGDKGLFLKELELAMLRGDADCAVHSFKDVPMELDDPFVLPAILERGDPADALVSNLYASLQALPLGARVGTSSLRRQAQLRAARPDLELIDLRGNVNTRLAKLDNGGYDAIVLACAGLQRLGLDERISARLDAPEWLPAPAQGAVAVECRGDDARIHSLLAVLDAGRTRACVEAERAMNRALHGSCHVPVAALARWEGEGLFLQGMVGSASDGRLIHADAHGSADDTQDLGRRVAQGLFDKGAAQLLAAL.

Cysteine 240 carries the post-translational modification S-(dipyrrolylmethanemethyl)cysteine.

Belongs to the HMBS family. In terms of assembly, monomer. Dipyrromethane serves as cofactor.

The enzyme catalyses 4 porphobilinogen + H2O = hydroxymethylbilane + 4 NH4(+). Its pathway is porphyrin-containing compound metabolism; protoporphyrin-IX biosynthesis; coproporphyrinogen-III from 5-aminolevulinate: step 2/4. Functionally, tetrapolymerization of the monopyrrole PBG into the hydroxymethylbilane pre-uroporphyrinogen in several discrete steps. This Xanthomonas oryzae pv. oryzae (strain KACC10331 / KXO85) protein is Porphobilinogen deaminase.